The sequence spans 401 residues: Elongation factor Tu (401 aa).

The 202-residue stretch at 10 to 211 (KPHLNVGTIG…ALDTFVPNPK (202 aa)) folds into the tr-type G domain. Positions 19 to 26 (GHVDHGKT) are G1. 19-26 (GHVDHGKT) contributes to the GTP binding site. Thr26 serves as a coordination point for Mg(2+). Residues 62-66 (GITIA) form a G2 region. The tract at residues 83–86 (DCPG) is G3. GTP contacts are provided by residues 83–87 (DCPGH) and 138–141 (NKAD). The tract at residues 138-141 (NKAD) is G4. Residues 179–181 (SAV) form a G5 region.

This sequence belongs to the TRAFAC class translation factor GTPase superfamily. Classic translation factor GTPase family. EF-Tu/EF-1A subfamily. As to quaternary structure, monomer.

It localises to the cytoplasm. It catalyses the reaction GTP + H2O = GDP + phosphate + H(+). GTP hydrolase that promotes the GTP-dependent binding of aminoacyl-tRNA to the A-site of ribosomes during protein biosynthesis. The protein is Elongation factor Tu of Leptospira borgpetersenii serovar Hardjo-bovis (strain JB197).